Here is a 235-residue protein sequence, read N- to C-terminus: 2,3,4,5-tetrahydropyridine-2,6-dicarboxylate N-acetyltransferase (235 aa).

Belongs to the transferase hexapeptide repeat family. DapH subfamily.

The catalysed reaction is (S)-2,3,4,5-tetrahydrodipicolinate + acetyl-CoA + H2O = L-2-acetamido-6-oxoheptanedioate + CoA. The protein operates within amino-acid biosynthesis; L-lysine biosynthesis via DAP pathway; LL-2,6-diaminopimelate from (S)-tetrahydrodipicolinate (acetylase route): step 1/3. Functionally, catalyzes the transfer of an acetyl group from acetyl-CoA to tetrahydrodipicolinate. This Exiguobacterium sibiricum (strain DSM 17290 / CCUG 55495 / CIP 109462 / JCM 13490 / 255-15) protein is 2,3,4,5-tetrahydropyridine-2,6-dicarboxylate N-acetyltransferase.